The sequence spans 62 residues: MTIAFQLAVFALIVTSSILLISVPVVFASPDGWSSNKNVVFSGTSLWIGLVFLVGILNSLIS.

The next 2 helical transmembrane spans lie at 8–28 and 41–61; these read AVFA…VVFA and FSGT…NSLI.

It belongs to the PsbZ family. As to quaternary structure, PSII is composed of 1 copy each of membrane proteins PsbA, PsbB, PsbC, PsbD, PsbE, PsbF, PsbH, PsbI, PsbJ, PsbK, PsbL, PsbM, PsbT, PsbY, PsbZ, Psb30/Ycf12, at least 3 peripheral proteins of the oxygen-evolving complex and a large number of cofactors. It forms dimeric complexes.

The protein resides in the plastid. It is found in the chloroplast thylakoid membrane. Functionally, may control the interaction of photosystem II (PSII) cores with the light-harvesting antenna, regulates electron flow through the 2 photosystem reaction centers. PSII is a light-driven water plastoquinone oxidoreductase, using light energy to abstract electrons from H(2)O, generating a proton gradient subsequently used for ATP formation. The polypeptide is Photosystem II reaction center protein Z (Pisum sativum (Garden pea)).